Consider the following 205-residue polypeptide: uncharacterized protein (205 aa).

An N-terminal signal peptide occupies residues 1-18 (MKASLALLSLLTAFTSHS).

This is an uncharacterized protein from Escherichia coli (strain K12).